An 822-amino-acid chain; its full sequence is MLPLFLVLSYLGQVIAAGKDVETPLLQITVPEKIDTNIQDAKEAETQVTYVVRIEGKAYTLQLEKQSFLHPLFGTYLRDKLGTLQPYFSLVKTHCFYQGHAAEIPVSTVTLSTCSGLRGLLQLENITYGIEPLESSATFEHILYEIKNNKIDYSPLKENFANSEQESQSYRILVKPEKGSNSTLTKRILRIKIIMDKAMFDHMGSEVGVATQKVVHIFGLINTMFSQLKMTVMLNSLEIWSEQDKIETNGDADEVLQRFLLWKSKEISQKAQDITYLLLYKDHPDYVGATYHGMACNPNFTAGIALHPKTLAVEGFAIVLSQLLGINLGLAYDDVYNCFCPGSTCIMNPSAIRSQGIKVFSSCSVDEFKQLASQPELDCLRNTSETEFVVQPQGGSYCGNHLLEVPEQCDCGPPETCTHKKCCNPKDCTLIDAAQCGTGPCCDKRTCTIAERGRLCRKSKDQCDFPEFCNGETEGCAPDTKAADLEPCNNETAYCFGGVCRDPDRQCTDLFGKYAKGPNYVCAQEVNLQNDKFGNCHGRCNYSAIFCGKAVCYWNFAEVIQTEKYDVQYTYLGGQVCVSAHLRSQTGTRDDTYVHDGTVCGSGQVCFRGDCLRVHVLRGTRECEADDKCQGHGICNNLNNCQCESGFAPPECDMTPSSPGGSMDDGFWLPFDKSTPLIFKRHGLKYKKVLLISFYILLPFLVVLAFMAVKRMIGKRLAKQNISKALEHKEEAFNRGSMNPGVVSGGNTDQNLMTVPGSFNSYAYHGNTDQNFMTVPGSFNSYSYHGNTDQNFMTVPGSFNSYSYQDVPYYRSIPEDGNDSQQ.

The first 16 residues, 1 to 16, serve as a signal peptide directing secretion; sequence MLPLFLVLSYLGQVIA. The 198-residue stretch at 187–384 folds into the Peptidase M12B domain; it reads RILRIKIIMD…PELDCLRNTS (198 aa). 7 cysteine pairs are disulfide-bonded: C296–C379, C338–C363, C340–C345, C456–C476, C623–C635, C629–C641, and C643–C652. Positions 395-484 constitute a Disintegrin domain; that stretch reads GSYCGNHLLE…GCAPDTKAAD (90 aa). An EGF-like domain is found at 619 to 653; sequence GTRECEADDKCQGHGICNNLNNCQCESGFAPPECD. Residues 689 to 709 form a helical membrane-spanning segment; sequence VLLISFYILLPFLVVLAFMAV.

Interacts with LY6K. Interacts with TEX101. Initially synthesized as a 110-kDa precursor in round spermatids, and the precursor is then processed into a 42-kDa mature protein during the sperm transport into and/or once in the epididymis. Expressed in sperm (at protein level).

Its subcellular location is the cell membrane. Involved in fertilization by controlling sperm migration into the oviduct. Promotes the binding of sperm to the oocyte zona pellucida. The polypeptide is A disintegrin and metallopeptidase domain 3 (Mus musculus (Mouse)).